The chain runs to 261 residues: Cytochrome c oxidase subunit 3 (261 aa).

Residues 1–15 (MTHQTHAYHMVNPSP) are Mitochondrial matrix-facing. Residues 16 to 34 (WPLTGALSALLMTSGLIMW) form a helical membrane-spanning segment. Residues 35–40 (FHFNST) lie on the Mitochondrial intermembrane side of the membrane. The helical transmembrane segment at 41–66 (TLLMLGLTTNMLTMYQWWRDVVREST) threads the bilayer. Over 67–72 (FQGHHT) the chain is Mitochondrial matrix. The chain crosses the membrane as a helical span at residues 73-105 (PNVQKGLRYGMILFIISEVLFFTGFFWAFYHSS). Topologically, residues 106-128 (LAPTPELGGCWPPTGIHPLNPLE) are mitochondrial intermembrane. A helical transmembrane segment spans residues 129–152 (VPLLNTSVLLASGVSITWAHHSLM). The Mitochondrial matrix portion of the chain corresponds to 153 to 155 (EGN). A helical membrane pass occupies residues 156-183 (RNHMLQALFITIALGVYFTLLQASEYYE). The Mitochondrial intermembrane segment spans residues 184–190 (APFTISD). A helical membrane pass occupies residues 191-223 (GVYGSTFFVATGFHGLHVIIGSTFLIVCFFRQL). Over 224–232 (KFHFTSSHH) the chain is Mitochondrial matrix. The helical transmembrane segment at 233 to 256 (FGFEAAAWYWHFVDVVWLFLYVSI) threads the bilayer. Residues 257 to 261 (YWWGS) lie on the Mitochondrial intermembrane side of the membrane.

This sequence belongs to the cytochrome c oxidase subunit 3 family. As to quaternary structure, component of the cytochrome c oxidase (complex IV, CIV), a multisubunit enzyme composed of 14 subunits. The complex is composed of a catalytic core of 3 subunits MT-CO1, MT-CO2 and MT-CO3, encoded in the mitochondrial DNA, and 11 supernumerary subunits COX4I, COX5A, COX5B, COX6A, COX6B, COX6C, COX7A, COX7B, COX7C, COX8 and NDUFA4, which are encoded in the nuclear genome. The complex exists as a monomer or a dimer and forms supercomplexes (SCs) in the inner mitochondrial membrane with NADH-ubiquinone oxidoreductase (complex I, CI) and ubiquinol-cytochrome c oxidoreductase (cytochrome b-c1 complex, complex III, CIII), resulting in different assemblies (supercomplex SCI(1)III(2)IV(1) and megacomplex MCI(2)III(2)IV(2)).

The protein resides in the mitochondrion inner membrane. It catalyses the reaction 4 Fe(II)-[cytochrome c] + O2 + 8 H(+)(in) = 4 Fe(III)-[cytochrome c] + 2 H2O + 4 H(+)(out). Component of the cytochrome c oxidase, the last enzyme in the mitochondrial electron transport chain which drives oxidative phosphorylation. The respiratory chain contains 3 multisubunit complexes succinate dehydrogenase (complex II, CII), ubiquinol-cytochrome c oxidoreductase (cytochrome b-c1 complex, complex III, CIII) and cytochrome c oxidase (complex IV, CIV), that cooperate to transfer electrons derived from NADH and succinate to molecular oxygen, creating an electrochemical gradient over the inner membrane that drives transmembrane transport and the ATP synthase. Cytochrome c oxidase is the component of the respiratory chain that catalyzes the reduction of oxygen to water. Electrons originating from reduced cytochrome c in the intermembrane space (IMS) are transferred via the dinuclear copper A center (CU(A)) of subunit 2 and heme A of subunit 1 to the active site in subunit 1, a binuclear center (BNC) formed by heme A3 and copper B (CU(B)). The BNC reduces molecular oxygen to 2 water molecules using 4 electrons from cytochrome c in the IMS and 4 protons from the mitochondrial matrix. This Gazella spekei (Speke's gazelle) protein is Cytochrome c oxidase subunit 3 (MT-CO3).